Reading from the N-terminus, the 333-residue chain is Nucleoid-associated protein APL_0429 (333 aa).

It belongs to the YejK family.

Its subcellular location is the cytoplasm. It localises to the nucleoid. This Actinobacillus pleuropneumoniae serotype 5b (strain L20) protein is Nucleoid-associated protein APL_0429.